The primary structure comprises 378 residues: Chaperone protein DnaJ (378 aa).

The J domain occupies 5–70 (DYYEVLGLQK…EKRAMYDQYG (66 aa)). Residues 135–213 (GVKKDIRIRT…CHGDGRVEKT (79 aa)) form a CR-type zinc finger. Zn(2+) is bound by residues cysteine 148, cysteine 151, cysteine 165, cysteine 168, cysteine 187, cysteine 190, cysteine 201, and cysteine 204. CXXCXGXG motif repeat units follow at residues 148-155 (CDTCHGSG), 165-172 (CPHCHGSG), 187-194 (CPSCHGTG), and 201-208 (CKSCHGDG).

The protein belongs to the DnaJ family. Homodimer. Zn(2+) is required as a cofactor.

The protein resides in the cytoplasm. In terms of biological role, participates actively in the response to hyperosmotic and heat shock by preventing the aggregation of stress-denatured proteins and by disaggregating proteins, also in an autonomous, DnaK-independent fashion. Unfolded proteins bind initially to DnaJ; upon interaction with the DnaJ-bound protein, DnaK hydrolyzes its bound ATP, resulting in the formation of a stable complex. GrpE releases ADP from DnaK; ATP binding to DnaK triggers the release of the substrate protein, thus completing the reaction cycle. Several rounds of ATP-dependent interactions between DnaJ, DnaK and GrpE are required for fully efficient folding. Also involved, together with DnaK and GrpE, in the DNA replication of plasmids through activation of initiation proteins. The protein is Chaperone protein DnaJ of Glaesserella parasuis serovar 5 (strain SH0165) (Haemophilus parasuis).